We begin with the raw amino-acid sequence, 246 residues long: 3-deoxy-manno-octulosonate cytidylyltransferase (246 aa).

The protein belongs to the KdsB family.

It localises to the cytoplasm. The enzyme catalyses 3-deoxy-alpha-D-manno-oct-2-ulosonate + CTP = CMP-3-deoxy-beta-D-manno-octulosonate + diphosphate. The protein operates within nucleotide-sugar biosynthesis; CMP-3-deoxy-D-manno-octulosonate biosynthesis; CMP-3-deoxy-D-manno-octulosonate from 3-deoxy-D-manno-octulosonate and CTP: step 1/1. It functions in the pathway bacterial outer membrane biogenesis; lipopolysaccharide biosynthesis. Its function is as follows. Activates KDO (a required 8-carbon sugar) for incorporation into bacterial lipopolysaccharide in Gram-negative bacteria. This is 3-deoxy-manno-octulosonate cytidylyltransferase from Myxococcus xanthus (strain DK1622).